The primary structure comprises 155 residues: 6,7-dimethyl-8-ribityllumazine synthase (155 aa).

5-amino-6-(D-ribitylamino)uracil is bound by residues F23, 57-59, and 81-83; these read AFE and AVI. (2S)-2-hydroxy-3-oxobutyl phosphate is bound at residue 86–87; that stretch reads AT. H89 serves as the catalytic Proton donor. F114 is a binding site for 5-amino-6-(D-ribitylamino)uracil. R128 is a binding site for (2S)-2-hydroxy-3-oxobutyl phosphate.

It belongs to the DMRL synthase family.

It carries out the reaction (2S)-2-hydroxy-3-oxobutyl phosphate + 5-amino-6-(D-ribitylamino)uracil = 6,7-dimethyl-8-(1-D-ribityl)lumazine + phosphate + 2 H2O + H(+). The protein operates within cofactor biosynthesis; riboflavin biosynthesis; riboflavin from 2-hydroxy-3-oxobutyl phosphate and 5-amino-6-(D-ribitylamino)uracil: step 1/2. In terms of biological role, catalyzes the formation of 6,7-dimethyl-8-ribityllumazine by condensation of 5-amino-6-(D-ribitylamino)uracil with 3,4-dihydroxy-2-butanone 4-phosphate. This is the penultimate step in the biosynthesis of riboflavin. The polypeptide is 6,7-dimethyl-8-ribityllumazine synthase (Pelotomaculum thermopropionicum (strain DSM 13744 / JCM 10971 / SI)).